We begin with the raw amino-acid sequence, 255 residues long: MLMAVDIGNTNIVIGFLEGDRIVGSYRITTKATHTSDEYGLMITQFLALSDYTADDVDDVIVCSVVPKVMYSFRASLIKFLGLEPMVVGPGVKTGMNIRLDDPKTLGSDCIADCAGAYHTYGGPVLVADFGTATTFNYVDSSGTIRSGFITTGIRTGAEALWGQTAQLPEVEITQPQSILATNTRTAMQAGLYYTFLGGIERTIQQFRKEIDEPFQVVATGGLSRIFKNNTDMIDVYDSDLIFKGMAYIYSRNVK.

Position 6–13 (6–13 (DIGNTNIV)) interacts with ATP. 107–110 (GSDC) lines the substrate pocket. The active-site Proton acceptor is D109. K(+) is bound at residue D129. T132 is an ATP binding site. T184 is a substrate binding site.

Belongs to the type III pantothenate kinase family. In terms of assembly, homodimer. NH4(+) is required as a cofactor. Requires K(+) as cofactor.

The protein resides in the cytoplasm. It carries out the reaction (R)-pantothenate + ATP = (R)-4'-phosphopantothenate + ADP + H(+). The protein operates within cofactor biosynthesis; coenzyme A biosynthesis; CoA from (R)-pantothenate: step 1/5. Functionally, catalyzes the phosphorylation of pantothenate (Pan), the first step in CoA biosynthesis. The sequence is that of Type III pantothenate kinase from Bifidobacterium longum subsp. infantis (strain ATCC 15697 / DSM 20088 / JCM 1222 / NCTC 11817 / S12).